Reading from the N-terminus, the 597-residue chain is Peptidyl-prolyl cis-trans isomerase-like 2 (597 aa).

The U-box domain occupies 41–114 (KKLPFNFCAA…TTDSDENKGD (74 aa)). The PPIase cyclophilin-type domain occupies 328–483 (NKGYVRMETN…NKIVIKDMII (156 aa)). Residues 495 to 519 (KKQKEGEEERKREVARQGGTEDDRT) are compositionally biased toward basic and acidic residues. Disordered stretches follow at residues 495 to 521 (KKQK…RTTW) and 560 to 597 (ATTT…FDGW).

It belongs to the cyclophilin-type PPIase family. PPIL2 subfamily.

Its subcellular location is the nucleus. The enzyme catalyses [protein]-peptidylproline (omega=180) = [protein]-peptidylproline (omega=0). It carries out the reaction S-ubiquitinyl-[E2 ubiquitin-conjugating enzyme]-L-cysteine + [acceptor protein]-L-lysine = [E2 ubiquitin-conjugating enzyme]-L-cysteine + N(6)-ubiquitinyl-[acceptor protein]-L-lysine.. The protein operates within protein modification; protein ubiquitination. Functionally, may catalyze the cis-trans isomerization of proline imidic peptide bonds in oligopeptides thereby assisting the folding of proteins. May also function as a chaperone, playing a role in intracellular transport of proteins. May also have a protein ubiquitin ligase activity acting as an E3 ubiquitin protein ligase or as a ubiquitin-ubiquitin ligase promoting elongation of ubiquitin chains on proteins. This Neurospora crassa (strain ATCC 24698 / 74-OR23-1A / CBS 708.71 / DSM 1257 / FGSC 987) protein is Peptidyl-prolyl cis-trans isomerase-like 2 (ppi-2).